The sequence spans 155 residues: 6,7-dimethyl-8-ribityllumazine synthase (155 aa).

5-amino-6-(D-ribitylamino)uracil contacts are provided by residues F22, 56 to 58, and 80 to 82; these read AFE and AVI. Residue 85–86 participates in (2S)-2-hydroxy-3-oxobutyl phosphate binding; that stretch reads AT. H88 acts as the Proton donor in catalysis. F113 is a 5-amino-6-(D-ribitylamino)uracil binding site. R127 lines the (2S)-2-hydroxy-3-oxobutyl phosphate pocket.

Belongs to the DMRL synthase family.

The enzyme catalyses (2S)-2-hydroxy-3-oxobutyl phosphate + 5-amino-6-(D-ribitylamino)uracil = 6,7-dimethyl-8-(1-D-ribityl)lumazine + phosphate + 2 H2O + H(+). It participates in cofactor biosynthesis; riboflavin biosynthesis; riboflavin from 2-hydroxy-3-oxobutyl phosphate and 5-amino-6-(D-ribitylamino)uracil: step 1/2. Its function is as follows. Catalyzes the formation of 6,7-dimethyl-8-ribityllumazine by condensation of 5-amino-6-(D-ribitylamino)uracil with 3,4-dihydroxy-2-butanone 4-phosphate. This is the penultimate step in the biosynthesis of riboflavin. This Clostridium acetobutylicum (strain ATCC 824 / DSM 792 / JCM 1419 / IAM 19013 / LMG 5710 / NBRC 13948 / NRRL B-527 / VKM B-1787 / 2291 / W) protein is 6,7-dimethyl-8-ribityllumazine synthase.